Reading from the N-terminus, the 190-residue chain is Threonylcarbamoyl-AMP synthase (190 aa).

The 184-residue stretch at 7–190 (NFVLADIVRA…ALTGKRFRQG (184 aa)) folds into the YrdC-like domain.

The protein belongs to the SUA5 family. TsaC subfamily.

Its subcellular location is the cytoplasm. The catalysed reaction is L-threonine + hydrogencarbonate + ATP = L-threonylcarbamoyladenylate + diphosphate + H2O. Required for the formation of a threonylcarbamoyl group on adenosine at position 37 (t(6)A37) in tRNAs that read codons beginning with adenine. Catalyzes the conversion of L-threonine, HCO(3)(-)/CO(2) and ATP to give threonylcarbamoyl-AMP (TC-AMP) as the acyladenylate intermediate, with the release of diphosphate. The protein is Threonylcarbamoyl-AMP synthase of Yersinia pestis bv. Antiqua (strain Angola).